The sequence spans 814 residues: ATP-dependent 6-phosphofructokinase 1 (814 aa).

The segment at 1-420 (MDADASTITP…NLETYKLLTK (420 aa)) is N-terminal catalytic PFK domain 1. ATP contacts are provided by residues glycine 55, 118–119 (RS), and 148–151 (GDGS). Aspartate 149 is a binding site for Mg(2+). Substrate contacts are provided by residues 194–196 (SID), arginine 231, 238–240 (MGR), glutamate 294, arginine 322, and 328–331 (HVQR). The active-site Proton acceptor is the aspartate 196. Residues 421 to 435 (MRTVEKDNLSEGHKF) form an interdomain linker region. A C-terminal regulatory PFK domain 2 region spans residues 436–814 (NVAVINVGAP…EEESADSHMF (379 aa)). Residues lysine 505, 563–567 (TISNN), arginine 601, 608–610 (MGG), glutamate 664, arginine 690, 696–699 (HVQQ), and arginine 771 each bind beta-D-fructose 2,6-bisphosphate.

It belongs to the phosphofructokinase type A (PFKA) family. ATP-dependent PFK group I subfamily. Eukaryotic two domain clade 'E' sub-subfamily. Homotetramer. The cofactor is Mg(2+).

The protein resides in the cytoplasm. The catalysed reaction is beta-D-fructose 6-phosphate + ATP = beta-D-fructose 1,6-bisphosphate + ADP + H(+). It participates in carbohydrate degradation; glycolysis; D-glyceraldehyde 3-phosphate and glycerone phosphate from D-glucose: step 3/4. With respect to regulation, allosterically activated by ADP, AMP, or fructose 2,6-bisphosphate, and allosterically inhibited by ATP or citrate. Catalyzes the phosphorylation of D-fructose 6-phosphate to fructose 1,6-bisphosphate by ATP, the first committing step of glycolysis. This is ATP-dependent 6-phosphofructokinase 1 from Caenorhabditis elegans.